The sequence spans 433 residues: 4-hydroxy-3-methylbut-2-en-1-yl diphosphate synthase (flavodoxin) (433 aa).

Residues 1-13 (MNKPETVTENSLA) show a composition bias toward polar residues. Residues 1–23 (MNKPETVTENSLASDVAGPAPRH) form a disordered region. Positions 314, 317, 360, and 367 each coordinate [4Fe-4S] cluster.

This sequence belongs to the IspG family. [4Fe-4S] cluster is required as a cofactor.

It catalyses the reaction (2E)-4-hydroxy-3-methylbut-2-enyl diphosphate + oxidized [flavodoxin] + H2O + 2 H(+) = 2-C-methyl-D-erythritol 2,4-cyclic diphosphate + reduced [flavodoxin]. Its pathway is isoprenoid biosynthesis; isopentenyl diphosphate biosynthesis via DXP pathway; isopentenyl diphosphate from 1-deoxy-D-xylulose 5-phosphate: step 5/6. Its function is as follows. Converts 2C-methyl-D-erythritol 2,4-cyclodiphosphate (ME-2,4cPP) into 1-hydroxy-2-methyl-2-(E)-butenyl 4-diphosphate. This chain is 4-hydroxy-3-methylbut-2-en-1-yl diphosphate synthase (flavodoxin), found in Bradyrhizobium sp. (strain ORS 278).